Consider the following 221-residue polypeptide: Thymine/uracil-DNA glycosylase (221 aa).

Positions 105–133 (DYGGRVPRNRKAILDLPGVGKYTCAAVMC) constitute a HhH domain. [4Fe-4S] cluster contacts are provided by Cys197, Cys204, Cys207, and Cys213.

This sequence belongs to the Nth/MutY family. [4Fe-4S] cluster is required as a cofactor.

It catalyses the reaction Hydrolyzes mismatched double-stranded DNA and polynucleotides, releasing free thymine.. Its function is as follows. DNA glycosylase that excises thymine from T/G mismatches and uracil from U/G mismatches. Acts as a repair enzyme able to counteract the mutagenic effect of spontaneous hydrolytic deamination of DNA 5-methylcytosine (5-meC) residues that leads to the formation of T/G mismatches. May also repair U/G mismatches arising from hydrolytic deamination of DNA cytosine residues. G/G, A/G, T/C and U/C are minor substrates. This is Thymine/uracil-DNA glycosylase from Methanothermobacter thermautotrophicus (Methanobacterium thermoformicicum).